A 275-amino-acid polypeptide reads, in one-letter code: NADPH-dependent 7-cyano-7-deazaguanine reductase (275 aa).

Residue 81–83 (VES) coordinates substrate. An NADPH-binding site is contributed by 83–84 (SK). Cys-182 serves as the catalytic Thioimide intermediate. Catalysis depends on Asp-189, which acts as the Proton donor. 221–222 (HE) is a binding site for substrate. 250 to 251 (RG) contributes to the NADPH binding site.

Belongs to the GTP cyclohydrolase I family. QueF type 2 subfamily. In terms of assembly, homodimer.

Its subcellular location is the cytoplasm. It carries out the reaction 7-aminomethyl-7-carbaguanine + 2 NADP(+) = 7-cyano-7-deazaguanine + 2 NADPH + 3 H(+). The protein operates within tRNA modification; tRNA-queuosine biosynthesis. Catalyzes the NADPH-dependent reduction of 7-cyano-7-deazaguanine (preQ0) to 7-aminomethyl-7-deazaguanine (preQ1). In Polaromonas sp. (strain JS666 / ATCC BAA-500), this protein is NADPH-dependent 7-cyano-7-deazaguanine reductase.